A 62-amino-acid chain; its full sequence is ATP synthase subunit J, mitochondrial (62 aa).

A helical transmembrane segment spans residues 13–32 (IVKPLWPYAVGGVITFFLFA).

In terms of assembly, F-type ATP synthases have 2 components, the catalytic core F(1) and the membrane-embedded component F(0), linked together by a central stalk and a peripheral stalk. The central stalk, also called rotor shaft, is often seen as part of F(1). The peripheral stalk is seen as part of F(0). F(0) contains the membrane channel next to the rotor. F-type ATP synthases form dimers but each monomer functions independently in ATP generation. The dimer consists of 17 different polypeptides: ATP1 (subunit alpha, 3 molecules per monomer, part of F(1)), ATP2 (subunit beta, 3 copies per monomer, part of F(1)), ATP3 (subunit gamma, part of the central stalk), ATP4 (subunit b, part of the peripheral stalk), ATP5/OSCP (subunit 5/OSCP, part of the peripheral stalk), ATP6 (subunit a, part of the peripheral stalk), ATP7 (subunit d, part of the peripheral stalk), ATP8 (subunit 8, part of the peripheral stalk), OLI1 (subunit c, part of the rotor, 10 molecules per monomer), ATP14 (subunit h, part of the peripheral stalk), ATP15 (subunit epsilon, part of the central stalk), ATP16 (subunit delta, part of the central stalk), ATP17 (subunit f, part of the peripheral stalk), ATP18 (subunit i/j, part of the peripheral stalk), ATP19 (subunit k, dimer-specific, at interface between monomers), ATP20 (subunit g, at interface between monomers), TIM11 (subunit e, at interface between monomers).

It localises to the mitochondrion inner membrane. Functionally, mitochondrial membrane ATP synthase (F(1)F(0) ATP synthase or Complex V) produces ATP from ADP in the presence of a proton gradient across the membrane which is generated by electron transport complexes of the respiratory chain. F-type ATP synthases consist of two structural domains, F(1) - containing the extramembraneous catalytic core, and F(0) - containing the membrane proton channel, linked together by a central stalk and a peripheral stalk. During catalysis, ATP synthesis in the catalytic domain of F(1) is coupled via a rotary mechanism of the central stalk subunits to proton translocation. Part of the complex F(0) domain. Minor subunit located with subunit a/ATP6 in the membrane. The chain is ATP synthase subunit J, mitochondrial from Yarrowia lipolytica (strain CLIB 122 / E 150) (Yeast).